A 275-amino-acid polypeptide reads, in one-letter code: Melanoma-associated antigen B5 (275 aa).

Residues 1 to 33 (MTSAGVFNAGSDERANSRDEEYPCSSEVSPSTE) are disordered. Residues 11-21 (SDERANSRDEE) show a composition bias toward basic and acidic residues. Residues 23 to 33 (PCSSEVSPSTE) show a composition bias toward low complexity. One can recognise an MAGE domain in the interval 40-239 (INIKVGLLEQ…GAFSSQYEEA (200 aa)).

As to expression, expressed in testis. Not expressed in other normal tissues, but is expressed in tumors of different histological origins.

This chain is Melanoma-associated antigen B5 (MAGEB5), found in Homo sapiens (Human).